The primary structure comprises 336 residues: Sulfate/thiosulfate import ATP-binding protein CysA (336 aa).

The 231-residue stretch at 3–233 (ITIENVSKSF…PASPFVMSFI (231 aa)) folds into the ABC transporter domain. Position 35–42 (35–42 (GPSGSGKS)) interacts with ATP.

It belongs to the ABC transporter superfamily. Sulfate/tungstate importer (TC 3.A.1.6) family. As to quaternary structure, the complex is composed of two ATP-binding proteins (CysA), two transmembrane proteins (CysT and CysW) and a solute-binding protein (CysP).

The protein resides in the cell inner membrane. It catalyses the reaction sulfate(out) + ATP + H2O = sulfate(in) + ADP + phosphate + H(+). The catalysed reaction is thiosulfate(out) + ATP + H2O = thiosulfate(in) + ADP + phosphate + H(+). Part of the ABC transporter complex CysAWTP involved in sulfate/thiosulfate import. Responsible for energy coupling to the transport system. The polypeptide is Sulfate/thiosulfate import ATP-binding protein CysA (Thermosynechococcus vestitus (strain NIES-2133 / IAM M-273 / BP-1)).